A 940-amino-acid polypeptide reads, in one-letter code: MATTRSAGGAATSVDTGPAAGNSGIRKLSTASVGGIAGGVAPSWQSCYYCTREHFKSISDFVNHLRNRHCTREGGSFVCRYGFNGVCASLPLDGVSDRDYDAHVAKYHVNQHTREMPPEWGVYSAAQNLPAVLNDPSRGKQSNLFTKKWGEHFVERSHVPPSPRLPDITHADFTVYLGSIGKRYRWHERRQQQLERDKPLENGAQGAPGPGTGGQTPTHLSSVPEIFLKSQLQLHHPATFKQVFPNYMQTSASSPESHQQTGRQLQEQLSHYLDMVEVKIAQQVSQKSAAFFHAMTTQHAILAEMEQAADQVRQLRAALAELHSHSVVDSFKVLRFAQRRQHYNLTLDKLRLMATVHKTQPMLQLLLGTQDYVAALDLIGTTQEILSAELLGIHCFKHLPMQLSEMEKLIDKMLTTEFERYAAADLNRPLTDALRETDSVCAEEDKLVAIVMGLLRKQNFSFVQAYQQEAIATIRAIIKQLLIEVLARSDSDQEISLTGHGEQALELTLPEWIALLQRSSQALVSILERIKTVVGIMQQTADAAVGAQDAVNLIDSEAFLSPGHHEQLKNQLQQLLQAVCHYCHERCANIVSPQSLERSSASEQELFQLSEIVDHFGETTRSICGVASVPLQLALKVQASRYAQRFHSERKQKLSLLLDQERWRQVDIPHEFQRIIERMAAGDYAKPEMGNLISNGAGNPVLLVEGKQPYTLVSASLMLIRMLYEYGCSAHRLPLLASYHARNVVDLLRCFNSRSCQLIIGAGAMRVAGLKTITSTNLALVSRALQLVLWLLPKLKEHFQAMSGYETIERDYQGHIKEIENKIHGIVSERLAAQLDAWEARPPIPSQTFRHISRHLVKLHEAIAGVLPEAQIHEIYGVVHRNFKDKLREQLLKLNVNNNGGPQHGVVTSELTFYMETLRTLKALPAEQLDNGILEEIWLY.

Thr-30 carries the phosphothreonine modification. Positions 192 to 218 are disordered; sequence QQLERDKPLENGAQGAPGPGTGGQTPT. Positions 299-325 form a coiled coil; that stretch reads HAILAEMEQAADQVRQLRAALAELHSH.

This sequence belongs to the VPS54 family.

It is found in the golgi apparatus. The protein localises to the trans-Golgi network. Its function is as follows. May be involved in retrograde transport from early and late endosomes to late Golgi. Required during spermatogenesis for sperm individualization. The chain is Vacuolar protein sorting-associated protein 54 (scat) from Drosophila melanogaster (Fruit fly).